A 371-amino-acid polypeptide reads, in one-letter code: Opine oxidase subunit B (371 aa).

In terms of assembly, heterodimer of a subunit A and a subunit B.

The protein operates within opine metabolism; octopine degradation. Oxidative cleavage of octopine into L-arginine and pyruvate. The chain is Opine oxidase subunit B (ooxB) from Agrobacterium tumefaciens (strain Ach5).